A 310-amino-acid chain; its full sequence is Acetyl-coenzyme A carboxylase carboxyl transferase subunit beta (310 aa).

One can recognise a CoA carboxyltransferase N-terminal domain in the interval 27-296 (LWKKCPKCSA…PEFENEEELE (270 aa)). Zn(2+) contacts are provided by C31, C34, C50, and C53. Residues 31-53 (CPKCSAVLYRPELEKNLDVCPKC) form a C4-type zinc finger. Residues 285–310 (PEPEFENEEELEEEEMERPEPPDNVE) are disordered. The segment covering 287–310 (PEFENEEELEEEEMERPEPPDNVE) has biased composition (acidic residues).

This sequence belongs to the AccD/PCCB family. Acetyl-CoA carboxylase is a heterohexamer composed of biotin carboxyl carrier protein (AccB), biotin carboxylase (AccC) and two subunits each of ACCase subunit alpha (AccA) and ACCase subunit beta (AccD). Zn(2+) serves as cofactor.

The protein localises to the cytoplasm. The catalysed reaction is N(6)-carboxybiotinyl-L-lysyl-[protein] + acetyl-CoA = N(6)-biotinyl-L-lysyl-[protein] + malonyl-CoA. It participates in lipid metabolism; malonyl-CoA biosynthesis; malonyl-CoA from acetyl-CoA: step 1/1. Component of the acetyl coenzyme A carboxylase (ACC) complex. Biotin carboxylase (BC) catalyzes the carboxylation of biotin on its carrier protein (BCCP) and then the CO(2) group is transferred by the transcarboxylase to acetyl-CoA to form malonyl-CoA. The chain is Acetyl-coenzyme A carboxylase carboxyl transferase subunit beta from Hahella chejuensis (strain KCTC 2396).